Reading from the N-terminus, the 673-residue chain is Thimet-like oligopeptidase (673 aa).

H465 serves as a coordination point for Zn(2+). E466 is a catalytic residue. Zn(2+)-binding residues include H469 and H472.

It belongs to the peptidase M3 family. Zn(2+) is required as a cofactor.

This Dictyostelium discoideum (Social amoeba) protein is Thimet-like oligopeptidase.